A 236-amino-acid polypeptide reads, in one-letter code: Small ribosomal subunit protein uS2c (236 aa).

It belongs to the universal ribosomal protein uS2 family.

The protein localises to the plastid. It is found in the chloroplast. The polypeptide is Small ribosomal subunit protein uS2c (rps2) (Physcomitrium patens (Spreading-leaved earth moss)).